Consider the following 367-residue polypeptide: Dual-specificity RNA methyltransferase RlmN (367 aa).

Residue Glu93 is the Proton acceptor of the active site. The Radical SAM core domain occupies 99–333 (EEDRATLCVS…VIVRKTRGDD (235 aa)). The cysteines at positions 106 and 338 are disulfide-linked. Positions 113, 117, and 120 each coordinate [4Fe-4S] cluster. Residues 162-163 (GE), Ser194, 216-218 (SLH), and Asn295 contribute to the S-adenosyl-L-methionine site. Cys338 functions as the S-methylcysteine intermediate in the catalytic mechanism.

Belongs to the radical SAM superfamily. RlmN family. It depends on [4Fe-4S] cluster as a cofactor.

It is found in the cytoplasm. It catalyses the reaction adenosine(2503) in 23S rRNA + 2 reduced [2Fe-2S]-[ferredoxin] + 2 S-adenosyl-L-methionine = 2-methyladenosine(2503) in 23S rRNA + 5'-deoxyadenosine + L-methionine + 2 oxidized [2Fe-2S]-[ferredoxin] + S-adenosyl-L-homocysteine. The catalysed reaction is adenosine(37) in tRNA + 2 reduced [2Fe-2S]-[ferredoxin] + 2 S-adenosyl-L-methionine = 2-methyladenosine(37) in tRNA + 5'-deoxyadenosine + L-methionine + 2 oxidized [2Fe-2S]-[ferredoxin] + S-adenosyl-L-homocysteine. Specifically methylates position 2 of adenine 2503 in 23S rRNA and position 2 of adenine 37 in tRNAs. m2A2503 modification seems to play a crucial role in the proofreading step occurring at the peptidyl transferase center and thus would serve to optimize ribosomal fidelity. The polypeptide is Dual-specificity RNA methyltransferase RlmN (Aeromonas hydrophila subsp. hydrophila (strain ATCC 7966 / DSM 30187 / BCRC 13018 / CCUG 14551 / JCM 1027 / KCTC 2358 / NCIMB 9240 / NCTC 8049)).